The primary structure comprises 275 residues: tRNA uridine(34) hydroxylase (275 aa).

The region spanning 121 to 214 is the Rhodanese domain; it reads SQPDVLVIDT…YLEKTYNKNG (94 aa). Cysteine 174 acts as the Cysteine persulfide intermediate in catalysis.

This sequence belongs to the TrhO family.

The catalysed reaction is uridine(34) in tRNA + AH2 + O2 = 5-hydroxyuridine(34) in tRNA + A + H2O. Functionally, catalyzes oxygen-dependent 5-hydroxyuridine (ho5U) modification at position 34 in tRNAs. The polypeptide is tRNA uridine(34) hydroxylase (Wolbachia pipientis wMel).